Reading from the N-terminus, the 282-residue chain is Bifunctional protein FolD (282 aa).

NADP(+) is bound by residues 166 to 168 (GAS) and Ile232.

It belongs to the tetrahydrofolate dehydrogenase/cyclohydrolase family. Homodimer.

It carries out the reaction (6R)-5,10-methylene-5,6,7,8-tetrahydrofolate + NADP(+) = (6R)-5,10-methenyltetrahydrofolate + NADPH. It catalyses the reaction (6R)-5,10-methenyltetrahydrofolate + H2O = (6R)-10-formyltetrahydrofolate + H(+). It participates in one-carbon metabolism; tetrahydrofolate interconversion. In terms of biological role, catalyzes the oxidation of 5,10-methylenetetrahydrofolate to 5,10-methenyltetrahydrofolate and then the hydrolysis of 5,10-methenyltetrahydrofolate to 10-formyltetrahydrofolate. In Haemophilus influenzae (strain PittEE), this protein is Bifunctional protein FolD.